A 188-amino-acid polypeptide reads, in one-letter code: Alkyl hydroperoxide reductase C (188 aa).

Positions 2–158 constitute a Thioredoxin domain; the sequence is SLIGTEVQPF…LINKVKAAQY (157 aa). Cys-48 functions as the Cysteine sulfenic acid (-SOH) intermediate in the catalytic mechanism.

This sequence belongs to the peroxiredoxin family. AhpC/Prx1 subfamily. As to quaternary structure, homodimer; disulfide-linked, upon oxidation. 5 homodimers assemble to form a ring-like decamer.

It localises to the cytoplasm. The catalysed reaction is a hydroperoxide + NADH + H(+) = an alcohol + NAD(+) + H2O. Its function is as follows. Thiol-specific peroxidase that catalyzes the reduction of hydrogen peroxide and organic hydroperoxides to water and alcohols, respectively. Plays a role in cell protection against oxidative stress by detoxifying peroxides. In Amphibacillus xylanus (strain ATCC 51415 / DSM 6626 / JCM 7361 / LMG 17667 / NBRC 15112 / Ep01), this protein is Alkyl hydroperoxide reductase C (ahpC).